We begin with the raw amino-acid sequence, 158 residues long: Transcription elongation factor GreA (158 aa).

The stretch at 4-75 (QKQYPMTQEG…QRVENMLRNA (72 aa)) forms a coiled coil.

The protein belongs to the GreA/GreB family.

Functionally, necessary for efficient RNA polymerase transcription elongation past template-encoded arresting sites. The arresting sites in DNA have the property of trapping a certain fraction of elongating RNA polymerases that pass through, resulting in locked ternary complexes. Cleavage of the nascent transcript by cleavage factors such as GreA or GreB allows the resumption of elongation from the new 3'terminus. GreA releases sequences of 2 to 3 nucleotides. This Staphylococcus saprophyticus subsp. saprophyticus (strain ATCC 15305 / DSM 20229 / NCIMB 8711 / NCTC 7292 / S-41) protein is Transcription elongation factor GreA.